Consider the following 136-residue polypeptide: Large ribosomal subunit protein uL16 (136 aa).

This sequence belongs to the universal ribosomal protein uL16 family. As to quaternary structure, part of the 50S ribosomal subunit.

In terms of biological role, binds 23S rRNA and is also seen to make contacts with the A and possibly P site tRNAs. The sequence is that of Large ribosomal subunit protein uL16 from Rickettsia peacockii (strain Rustic).